The primary structure comprises 249 residues: UDP-N-acetyl-D-mannosaminuronic acid transferase (249 aa).

It belongs to the glycosyltransferase 26 family.

It carries out the reaction UDP-N-acetyl-alpha-D-mannosaminouronate + N-acetyl-alpha-D-glucosaminyl-di-trans,octa-cis-undecaprenyl diphosphate = beta-D-ManNAcA-(1-&gt;4)-alpha-D-GlcNAc-di-trans,octa-cis-undecaprenyl diphosphate + UDP + H(+). It participates in bacterial outer membrane biogenesis; enterobacterial common antigen biosynthesis. Catalyzes the synthesis of Und-PP-GlcNAc-ManNAcA (Lipid II), the second lipid-linked intermediate involved in enterobacterial common antigen (ECA) synthesis. In Pectobacterium carotovorum subsp. carotovorum (strain PC1), this protein is UDP-N-acetyl-D-mannosaminuronic acid transferase.